We begin with the raw amino-acid sequence, 157 residues long: Crossover junction endodeoxyribonuclease RuvC (157 aa).

Residues Asp-7, Glu-67, and Asp-140 contribute to the active site. Mg(2+)-binding residues include Asp-7, Glu-67, and Asp-140.

Belongs to the RuvC family. As to quaternary structure, homodimer which binds Holliday junction (HJ) DNA. The HJ becomes 2-fold symmetrical on binding to RuvC with unstacked arms; it has a different conformation from HJ DNA in complex with RuvA. In the full resolvosome a probable DNA-RuvA(4)-RuvB(12)-RuvC(2) complex forms which resolves the HJ. Requires Mg(2+) as cofactor.

Its subcellular location is the cytoplasm. It catalyses the reaction Endonucleolytic cleavage at a junction such as a reciprocal single-stranded crossover between two homologous DNA duplexes (Holliday junction).. Its function is as follows. The RuvA-RuvB-RuvC complex processes Holliday junction (HJ) DNA during genetic recombination and DNA repair. Endonuclease that resolves HJ intermediates. Cleaves cruciform DNA by making single-stranded nicks across the HJ at symmetrical positions within the homologous arms, yielding a 5'-phosphate and a 3'-hydroxyl group; requires a central core of homology in the junction. The consensus cleavage sequence is 5'-(A/T)TT(C/G)-3'. Cleavage occurs on the 3'-side of the TT dinucleotide at the point of strand exchange. HJ branch migration catalyzed by RuvA-RuvB allows RuvC to scan DNA until it finds its consensus sequence, where it cleaves and resolves the cruciform DNA. This is Crossover junction endodeoxyribonuclease RuvC from Rickettsia massiliae (strain Mtu5).